The primary structure comprises 753 residues: 5-methyltetrahydropteroyltriglutamate--homocysteine methyltransferase (753 aa).

5-methyltetrahydropteroyltri-L-glutamate is bound by residues arginine 17–lysine 20 and lysine 117. L-homocysteine is bound by residues isoleucine 431–serine 433 and glutamate 484. Residues isoleucine 431–serine 433 and glutamate 484 each bind L-methionine. 5-methyltetrahydropteroyltri-L-glutamate contacts are provided by residues arginine 515–cysteine 516 and tryptophan 561. Aspartate 599 is a binding site for L-homocysteine. L-methionine is bound at residue aspartate 599. Glutamate 605 provides a ligand contact to 5-methyltetrahydropteroyltri-L-glutamate. Zn(2+) is bound by residues histidine 641, cysteine 643, and glutamate 665. Histidine 694 functions as the Proton donor in the catalytic mechanism. Cysteine 726 contacts Zn(2+).

The protein belongs to the vitamin-B12 independent methionine synthase family. It depends on Zn(2+) as a cofactor.

It carries out the reaction 5-methyltetrahydropteroyltri-L-glutamate + L-homocysteine = tetrahydropteroyltri-L-glutamate + L-methionine. It functions in the pathway amino-acid biosynthesis; L-methionine biosynthesis via de novo pathway; L-methionine from L-homocysteine (MetE route): step 1/1. Functionally, catalyzes the transfer of a methyl group from 5-methyltetrahydrofolate to homocysteine resulting in methionine formation. This is 5-methyltetrahydropteroyltriglutamate--homocysteine methyltransferase from Escherichia coli O139:H28 (strain E24377A / ETEC).